A 96-amino-acid chain; its full sequence is Small ribosomal subunit protein bS6 (96 aa).

This sequence belongs to the bacterial ribosomal protein bS6 family.

Binds together with bS18 to 16S ribosomal RNA. In Bacillus thuringiensis subsp. konkukian (strain 97-27), this protein is Small ribosomal subunit protein bS6.